The following is a 268-amino-acid chain: Protein c-ets-1-B (268 aa).

The helix HI-1 stretch occupies residues 131 to 139; that stretch reads FKDYVRDRA. Positions 150–157 are helix HI-2; sequence AAALAGYT. A DNA-binding region (ETS) is located at residues 162–242; it reads IQLWQFLLEL…AGKRYVYRFV (81 aa). Positions 245–249 are helix H4; that stretch reads LQSLL. The segment at 253-259 is helix H5; that stretch reads PEELHAM.

This sequence belongs to the ETS family. In terms of assembly, binds DNA as a homodimer; homodimerization is required for transcription activation.

The protein resides in the nucleus. The protein localises to the cytoplasm. Autoinhibited by a module composed of four alpha helices (HI-1, HI-2, H4, and H5) that flank the DNA-binding ETS domain, reducing the affinity for DNA. Functionally, transcription factor. Directly controls the expression of cytokine and chemokine genes in a wide variety of different cellular contexts. The polypeptide is Protein c-ets-1-B (ets1-b) (Xenopus laevis (African clawed frog)).